We begin with the raw amino-acid sequence, 279 residues long: Undecaprenyl-diphosphatase (279 aa).

8 consecutive transmembrane segments (helical) span residues 1 to 21 (MVLE…LPIS), 39 to 59 (GRFF…LYFF), 96 to 116 (LLLV…VRFV), 128 to 148 (FTMG…DALF), 155 to 175 (IFQI…FAII), 201 to 221 (FSFL…LVAG), 231 to 251 (YSLI…SALL), and 259 to 279 (FVLF…VSFF).

The protein belongs to the UppP family.

Its subcellular location is the cell membrane. The catalysed reaction is di-trans,octa-cis-undecaprenyl diphosphate + H2O = di-trans,octa-cis-undecaprenyl phosphate + phosphate + H(+). Catalyzes the dephosphorylation of undecaprenyl diphosphate (UPP). Confers resistance to bacitracin. The chain is Undecaprenyl-diphosphatase from Tropheryma whipplei (strain TW08/27) (Whipple's bacillus).